The sequence spans 142 residues: Large ribosomal subunit protein uL13 (142 aa).

The protein belongs to the universal ribosomal protein uL13 family. As to quaternary structure, part of the 50S ribosomal subunit.

Functionally, this protein is one of the early assembly proteins of the 50S ribosomal subunit, although it is not seen to bind rRNA by itself. It is important during the early stages of 50S assembly. This is Large ribosomal subunit protein uL13 from Acholeplasma laidlawii (strain PG-8A).